The primary structure comprises 367 residues: Phosphoribosylaminoimidazole-succinocarboxamide synthase (367 aa).

The protein belongs to the SAICAR synthetase family.

The catalysed reaction is 5-amino-1-(5-phospho-D-ribosyl)imidazole-4-carboxylate + L-aspartate + ATP = (2S)-2-[5-amino-1-(5-phospho-beta-D-ribosyl)imidazole-4-carboxamido]succinate + ADP + phosphate + 2 H(+). It participates in purine metabolism; IMP biosynthesis via de novo pathway; 5-amino-1-(5-phospho-D-ribosyl)imidazole-4-carboxamide from 5-amino-1-(5-phospho-D-ribosyl)imidazole-4-carboxylate: step 1/2. This chain is Phosphoribosylaminoimidazole-succinocarboxamide synthase, found in Shewanella baltica (strain OS195).